The primary structure comprises 142 residues: 3-hydroxyacyl-[acyl-carrier-protein] dehydratase FabZ (142 aa).

H47 is a catalytic residue.

Belongs to the thioester dehydratase family. FabZ subfamily.

It localises to the cytoplasm. The catalysed reaction is a (3R)-hydroxyacyl-[ACP] = a (2E)-enoyl-[ACP] + H2O. Its function is as follows. Involved in unsaturated fatty acids biosynthesis. Catalyzes the dehydration of short chain beta-hydroxyacyl-ACPs and long chain saturated and unsaturated beta-hydroxyacyl-ACPs. This Thermoanaerobacter pseudethanolicus (strain ATCC 33223 / 39E) (Clostridium thermohydrosulfuricum) protein is 3-hydroxyacyl-[acyl-carrier-protein] dehydratase FabZ.